A 735-amino-acid polypeptide reads, in one-letter code: Phosphoribosylformylglycinamidine synthase subunit PurL (735 aa).

The active site involves His44. Tyr47 and Lys86 together coordinate ATP. Residue Glu88 participates in Mg(2+) binding. Substrate contacts are provided by residues 89–92 (SHNH) and Arg111. His90 functions as the Proton acceptor in the catalytic mechanism. Position 112 (Asp112) interacts with Mg(2+). Residue Gln240 coordinates substrate. Asp268 contacts Mg(2+). Residue 312 to 314 (ESQ) coordinates substrate. The ATP site is built by Asp496 and Gly533. Residue Asn534 participates in Mg(2+) binding. Substrate is bound at residue Ser536.

It belongs to the FGAMS family. As to quaternary structure, monomer. Part of the FGAM synthase complex composed of 1 PurL, 1 PurQ and 2 PurS subunits.

The protein localises to the cytoplasm. It carries out the reaction N(2)-formyl-N(1)-(5-phospho-beta-D-ribosyl)glycinamide + L-glutamine + ATP + H2O = 2-formamido-N(1)-(5-O-phospho-beta-D-ribosyl)acetamidine + L-glutamate + ADP + phosphate + H(+). It functions in the pathway purine metabolism; IMP biosynthesis via de novo pathway; 5-amino-1-(5-phospho-D-ribosyl)imidazole from N(2)-formyl-N(1)-(5-phospho-D-ribosyl)glycinamide: step 1/2. Functionally, part of the phosphoribosylformylglycinamidine synthase complex involved in the purines biosynthetic pathway. Catalyzes the ATP-dependent conversion of formylglycinamide ribonucleotide (FGAR) and glutamine to yield formylglycinamidine ribonucleotide (FGAM) and glutamate. The FGAM synthase complex is composed of three subunits. PurQ produces an ammonia molecule by converting glutamine to glutamate. PurL transfers the ammonia molecule to FGAR to form FGAM in an ATP-dependent manner. PurS interacts with PurQ and PurL and is thought to assist in the transfer of the ammonia molecule from PurQ to PurL. The protein is Phosphoribosylformylglycinamidine synthase subunit PurL of Nitratiruptor sp. (strain SB155-2).